The primary structure comprises 212 residues: Casparian strip membrane protein 1 (212 aa).

Residues Met1–Pro28 form a disordered region. Residues Met1–Arg49 lie on the Cytoplasmic side of the membrane. Residues Pro16–Pro28 are compositionally biased toward low complexity. The helical transmembrane segment at Gly50 to Ala70 threads the bilayer. The Extracellular segment spans residues Thr71–Thr100. A helical transmembrane segment spans residues Phe101 to Ile121. At Leu122–Arg133 the chain is on the cytoplasmic side. The helical transmembrane segment at Leu134–Ala154 threads the bilayer. Over Ala155–Gly186 the chain is Extracellular. Residues Ala187–Val207 traverse the membrane as a helical segment. Residues Ala208–Lys212 are Cytoplasmic-facing.

This sequence belongs to the Casparian strip membrane proteins (CASP) family. Homodimer and heterodimers.

Its subcellular location is the cell membrane. Its function is as follows. Regulates membrane-cell wall junctions and localized cell wall deposition. Required for establishment of the Casparian strip membrane domain (CSD) and the subsequent formation of Casparian strips, a cell wall modification of the root endodermis that determines an apoplastic barrier between the intraorganismal apoplasm and the extraorganismal apoplasm and prevents lateral diffusion. The chain is Casparian strip membrane protein 1 from Helianthus annuus (Common sunflower).